The chain runs to 372 residues: Fatty acid conjugase FAC2 B (372 aa).

A run of 2 helical transmembrane segments spans residues 44-64 (YFLF…SNYI) and 74-94 (IVWP…WMIG). Residues 95-99 (HECGH) carry the Histidine box-1 motif. The short motif at 131–135 (HRNHH) is the Histidine box-2 element. A run of 3 helical transmembrane segments spans residues 166–186 (IGLM…YIMF), 217–237 (VLFS…IVTV), and 240–260 (AMPA…ILFA). Residues 304 to 308 (HVIHH) carry the Histidine box-3 motif.

It belongs to the fatty acid desaturase type 1 family. Expressed exclusively in the developing seeds. Not detected in leaves.

The protein localises to the microsome membrane. The enzyme catalyses a (9Z,12Z)-octadecadienoyl-containing glycerolipid + AH2 + O2 = a (8E,10E,12Z)-octadecatrienoyl-containing glycerolipid + A + 2 H2O. The protein operates within lipid metabolism; polyunsaturated fatty acid biosynthesis. Its function is as follows. Fatty acid conjugase converting 18:2(9Z, 12Z) to calendic acid 18:3(8E, 10E, 12Z). Converts alpha-linolenic acid (18:3(9Z, 12Z, 15Z)) into 18:4(8E, 10E, 12Z, 15Z). Also has weak activity on the mono-unsaturates 16:1(9Z) and 18:1(9Z) producing two conjugated double bonds at delta(8) and delta(10) position. The chain is Fatty acid conjugase FAC2 B from Calendula officinalis (Pot marigold).